The primary structure comprises 306 residues: Plant-type L-asparaginase (306 aa).

T176 (nucleophile) is an active-site residue. Residues R203–D206 and T225–G228 contribute to the substrate site.

This sequence belongs to the Ntn-hydrolase family. As to quaternary structure, heterotetramer of two alpha and two beta chains arranged as a dimer of alpha/beta heterodimers. Post-translationally, autocleaved. Generates the alpha and beta subunits. The N-terminal residue of the beta subunit is thought to be responsible for the nucleophile hydrolase activity.

It catalyses the reaction L-asparagine + H2O = L-aspartate + NH4(+). In terms of biological role, catalyzes the hydrolysis of L-asparagine into L-aspartate and ammonia. The chain is Plant-type L-asparaginase from Pyrococcus furiosus (strain ATCC 43587 / DSM 3638 / JCM 8422 / Vc1).